Consider the following 101-residue polypeptide: NAD(P)H-quinone oxidoreductase subunit 4L, chloroplastic (101 aa).

3 helical membrane-spanning segments follow: residues 2–22 (MLEY…YGLI), 32–52 (MCLE…SDLF), and 61–81 (IFSI…PAIV).

This sequence belongs to the complex I subunit 4L family. In terms of assembly, NDH is composed of at least 16 different subunits, 5 of which are encoded in the nucleus.

It localises to the plastid. The protein resides in the chloroplast thylakoid membrane. It carries out the reaction a plastoquinone + NADH + (n+1) H(+)(in) = a plastoquinol + NAD(+) + n H(+)(out). The catalysed reaction is a plastoquinone + NADPH + (n+1) H(+)(in) = a plastoquinol + NADP(+) + n H(+)(out). Functionally, NDH shuttles electrons from NAD(P)H:plastoquinone, via FMN and iron-sulfur (Fe-S) centers, to quinones in the photosynthetic chain and possibly in a chloroplast respiratory chain. The immediate electron acceptor for the enzyme in this species is believed to be plastoquinone. Couples the redox reaction to proton translocation, and thus conserves the redox energy in a proton gradient. The protein is NAD(P)H-quinone oxidoreductase subunit 4L, chloroplastic of Acorus calamus var. americanus (American sweet flag).